The following is a 434-amino-acid chain: Tryptophan--tRNA ligase (434 aa).

Residues 14–16 and 22–23 each bind ATP; these read TTS and GN. Residues 15–23 carry the 'HIGH' region motif; it reads TSGTPHLGN. Asp147 contacts L-tryptophan. Residues 159–161, Leu199, and 206–210 each bind ATP; these read GRD and KMSKS. Residues 206 to 210 carry the 'KMSKS' region motif; that stretch reads KMSKS.

This sequence belongs to the class-I aminoacyl-tRNA synthetase family. As to quaternary structure, homodimer.

Its subcellular location is the cytoplasm. The enzyme catalyses tRNA(Trp) + L-tryptophan + ATP = L-tryptophyl-tRNA(Trp) + AMP + diphosphate + H(+). Its function is as follows. Catalyzes the attachment of tryptophan to tRNA(Trp). The polypeptide is Tryptophan--tRNA ligase (Xylella fastidiosa (strain 9a5c)).